We begin with the raw amino-acid sequence, 475 residues long: NAD-dependent histone deacetylase sir2 (475 aa).

Over residues 1–12 (MASNPLDNNMPT) the composition is skewed to polar residues. Residues 1–35 (MASNPLDNNMPTTPVEEKIPVASYSPSSSGSSSGA) are disordered. Residues 20-35 (PVASYSPSSSGSSSGA) show a composition bias toward low complexity. The residue at position 55 (S55) is a Phosphoserine. In terms of domain architecture, Deacetylase sirtuin-type spans 139-436 (KLPHFNTFED…AGWLNELQAL (298 aa)). NAD(+) contacts are provided by residues 164–183 (GAGI…NGFY) and 246–249 (QNID). H266 acts as the Proton acceptor in catalysis. The Zn(2+) site is built by C274, C277, C298, and C301. NAD(+) is bound by residues 373–375 (GTS), 398–400 (SRT), and C416.

The protein belongs to the sirtuin family. Class I subfamily. Zn(2+) serves as cofactor.

The protein localises to the nucleus. It localises to the chromosome. Its subcellular location is the centromere. The protein resides in the telomere. It catalyses the reaction N(6)-acetyl-L-lysyl-[protein] + NAD(+) + H2O = 2''-O-acetyl-ADP-D-ribose + nicotinamide + L-lysyl-[protein]. Its function is as follows. Involved in silencing within the mating-type region, at the telomeres, and according to PubMed:12867036 also within centromeric DNA regions. Required for the localization of swi6 to the telomeres, silent mating type region, and according to PubMed:12867036 to the centromeric DNA regions. According to PubMed:15545655 not required for the localization of swi6 to centromeric foci. Deacetylates histone H3 on 'Lys-9' and 'Lys-16' of histone H4. This has a direct role in heterochromatin assembly. The protein is NAD-dependent histone deacetylase sir2 (sir2) of Schizosaccharomyces pombe (strain 972 / ATCC 24843) (Fission yeast).